The primary structure comprises 448 residues: UDP-glucose 6-dehydrogenase (448 aa).

Residues 2–19 (NITFIGSGYVGLVSGIIM), V11, D30, K35, T121, and E152 each bind NAD(+). Substrate-binding positions include 148 to 152 (EFLRE), K204, N208, 249 to 253 (FLNAG), and G257. The active-site Nucleophile is C260. K263 contributes to the NAD(+) binding site. Residue K321 participates in substrate binding. NAD(+) is bound at residue R328.

It belongs to the UDP-glucose/GDP-mannose dehydrogenase family.

The catalysed reaction is UDP-alpha-D-glucose + 2 NAD(+) + H2O = UDP-alpha-D-glucuronate + 2 NADH + 3 H(+). It participates in nucleotide-sugar biosynthesis; UDP-alpha-D-glucuronate biosynthesis; UDP-alpha-D-glucuronate from UDP-alpha-D-glucose: step 1/1. This chain is UDP-glucose 6-dehydrogenase (udg), found in Rickettsia felis (strain ATCC VR-1525 / URRWXCal2) (Rickettsia azadi).